The sequence spans 1663 residues: Cortactin-binding protein 2 (1663 aa).

Disordered regions lie at residues 1–23 (MATDGASCEPDLSRAPEDAAGAA), 203–222 (KKKTNELEEELSAEKRRSTE), 358–440 (RQAS…LHPG), and 454–479 (GNANDPDQNGNTTQSPPSRDMSPTSR). Positions 119–276 (KKMQERMSAQ…EQLKRGSDSK (158 aa)) form a coiled coil. The span at 386–396 (PSTDSTPDPTS) shows a compositional bias: low complexity. Positions 411-422 (QTPGIAPQNSQA) are enriched in polar residues. Arg498 carries the post-translational modification Asymmetric dimethylarginine. The segment at 499–616 (FTSPQAGAPS…SSPQLPPKPS (118 aa)) is disordered. A compositionally biased stretch (polar residues) spans 583–593 (TVASPPSSLPQ). 6 ANK repeats span residues 709–739 (GRPTLLQQAAAQGNVTLLSMLLNEEGLDINY), 743–772 (DGHSALYSAAKNGHTDCVRLLLSAEAQINA), 776–805 (NGFTPLCAAAAQGHFECVELLIAYDANINH), 809–838 (GGQTPLYLACKNENKECIKLLLEAGTNRSV), 842–871 (DGWTPVHAAVDTGNVDSLKLLMYHRIPACG), and 912–942 (EGWTAAHIAASKGFKNCLEILCRHGGLEPER). Residues 1446 to 1477 (NKKKGESGAWRKVNTSPRRKSGRFSLPTWNKP) are disordered. Ser1524 bears the Phosphoserine mark. Disordered regions lie at residues 1580 to 1602 (SQKEVSPLSSHQTTECSNSKSKT) and 1618 to 1663 (SKVT…KPNK). Residues 1582–1599 (KEVSPLSSHQTTECSNSK) are compositionally biased toward polar residues. A compositionally biased stretch (low complexity) spans 1624-1638 (SQNTKRSSSSSNTRQ). A compositionally biased stretch (basic and acidic residues) spans 1645 to 1663 (SKKENWNLHKNEHLDKPNK).

Interacts with CTTN/cortactin SH3 domain. Interacts with STRN, STRN4/zinedin and MOB4/phocein; this interactions mediate the association with the STRIPAK core complex and may regulate dendritic spine distribution of the STRIPAK complex in hippocampal neurons. Activation of glutamate receptors weakens the interaction with STRN and STRN4.

It localises to the cytoplasm. It is found in the cell cortex. The protein resides in the cell projection. The protein localises to the dendritic spine. Regulates the dendritic spine distribution of CTTN/cortactin in hippocampal neurons, and thus controls dendritic spinogenesis and dendritic spine maintenance. Associates with the striatin-interacting phosphatase and kinase (STRIPAK) core complex to regulate dendritic spine distribution of the STRIPAK complex in hippocampal neurons. The polypeptide is Cortactin-binding protein 2 (CTTNBP2) (Colobus guereza (Mantled guereza)).